Consider the following 330-residue polypeptide: MSFQTNYIHLADEILSGKTSISYEQALEILNSDENWWEIYAAALYLKNQVSRNNIRLNVLLSAKQGLCAENCGYCSQSKESTADIDKFGLLPQNVILKQAIVAHQNGASVFCIAMSGTKPSKREIEQLCQVIPEIKKSLPLEICLTAGFLDREQLHQLKQAGIDRINHNLNTPEENYPNIATTHSFKDRCDTLERIHNEDIDVCSGFICGMGESDEGLITLAFRLKELNPYSIPVNFLLAVEGTPLGKYNYLTPIKCLKIMAMLRFVFPFKELRLSAGREVHFENFESLVTLLVDSTFLGNYLTEGGRNQHTDIEFLEKLQLNHTKKELI.

The Radical SAM core domain occupies 53–276; the sequence is NNIRLNVLLS…VFPFKELRLS (224 aa). 3 residues coordinate [4Fe-4S] cluster: C68, C72, and C75. Positions 112, 144, 204, and 274 each coordinate [2Fe-2S] cluster.

This sequence belongs to the radical SAM superfamily. Biotin synthase family. In terms of assembly, homodimer. Requires [4Fe-4S] cluster as cofactor. [2Fe-2S] cluster serves as cofactor.

The catalysed reaction is (4R,5S)-dethiobiotin + (sulfur carrier)-SH + 2 reduced [2Fe-2S]-[ferredoxin] + 2 S-adenosyl-L-methionine = (sulfur carrier)-H + biotin + 2 5'-deoxyadenosine + 2 L-methionine + 2 oxidized [2Fe-2S]-[ferredoxin]. The protein operates within cofactor biosynthesis; biotin biosynthesis; biotin from 7,8-diaminononanoate: step 2/2. In terms of biological role, catalyzes the conversion of dethiobiotin (DTB) to biotin by the insertion of a sulfur atom into dethiobiotin via a radical-based mechanism. This Streptococcus agalactiae serotype III (strain NEM316) protein is Biotin synthase.